The chain runs to 670 residues: MPSATTASTNGANGASASPAPGNLSANDNIRRFAAPSRPLSPLPAHALFNDKTRCFVYGLQPRAVQGMLDFDFICKRSTPSVAGIIYTFGGQFVSKMYWGTSETLLPVYQEVPKAIAKHPDVDVVVNFASSRSVYSSTMELMEYPQIKTIAIIAEGVPERRAREIAYVAKKKGITIIGPATVGGIKPGCFKIGNTGGMMDNIVASKLYRKGSVGYVSKSGGMSNELNNIISQTTDGVYEGVAIGGDRYPGTTFIDHLLRYQADPDCKILVLLGEVGGVEEYKVIDAVKQGIITKPIVAWAIGTCASMFKTEVQFGHAGAFANSQLETAATKNKSMREAGFYVPDTFEDMPALLKQVYDKLVADGTIVPAPEPVVPKIPIDYSWAQELGLIRKPAAFISTISDDRGQELLYAGMPISDVFKEEIGIGGVMSLLWFRRRLPDYAAKFLEMVLMLTADHGPAVSGAMNTIITTRAGKDLISSLVAGLLTIGSRFGGALDGAAEEFTKAFDKGLSPREFVDTMRKQNKLIPGIGHRVKSRNNPDLRVELVKEYVKAKFPSTKLLDYALAVESVTTSKKDNLILNVDGCIAVCFVDLLRNCGAFSTEEAEDYLSMGVLNGLFVLGRSIGLIAHYLDQKRLRTGLYRHPWDDITYLLPSLQQPGPPGTEGRVEVQI.

The segment at 1–22 is disordered; it reads MPSATTASTNGANGASASPAPG. ATP contacts are provided by residues 257-277 and 308-334; these read LLRYQADPDCKILVLLGEVGG and FKTEVQFGHAGAFANSQLETAATKNKS. E274 contributes to the Mg(2+) binding site. The active-site Tele-phosphohistidine intermediate is H316. Residue 335 to 345 participates in CoA binding; that stretch reads MREAGFYVPDT.

Belongs to the succinate/malate CoA ligase alpha subunit family. In terms of assembly, composed of two subunits.

The protein resides in the cytoplasm. The catalysed reaction is oxaloacetate + acetyl-CoA + ADP + phosphate = citrate + ATP + CoA. Its function is as follows. Catalyzes the formation of cytosolic acetyl-CoA, which is mainly used for the biosynthesis of fatty acids and sterols. This Neurospora crassa (strain ATCC 24698 / 74-OR23-1A / CBS 708.71 / DSM 1257 / FGSC 987) protein is Probable ATP-citrate synthase subunit 1.